Here is a 316-residue protein sequence, read N- to C-terminus: Biotin synthase (316 aa).

The Radical SAM core domain maps to 39–263; that stretch reads NAIQCSTLLS…LFPKAYVRLS (225 aa). 3 residues coordinate [4Fe-4S] cluster: cysteine 54, cysteine 58, and cysteine 61. [2Fe-2S] cluster is bound by residues cysteine 98, cysteine 129, cysteine 189, and arginine 261.

It belongs to the radical SAM superfamily. Biotin synthase family. As to quaternary structure, homodimer. It depends on [4Fe-4S] cluster as a cofactor. [2Fe-2S] cluster serves as cofactor.

The catalysed reaction is (4R,5S)-dethiobiotin + (sulfur carrier)-SH + 2 reduced [2Fe-2S]-[ferredoxin] + 2 S-adenosyl-L-methionine = (sulfur carrier)-H + biotin + 2 5'-deoxyadenosine + 2 L-methionine + 2 oxidized [2Fe-2S]-[ferredoxin]. It participates in cofactor biosynthesis; biotin biosynthesis; biotin from 7,8-diaminononanoate: step 2/2. Functionally, catalyzes the conversion of dethiobiotin (DTB) to biotin by the insertion of a sulfur atom into dethiobiotin via a radical-based mechanism. This chain is Biotin synthase, found in Acidithiobacillus ferrooxidans (strain ATCC 23270 / DSM 14882 / CIP 104768 / NCIMB 8455) (Ferrobacillus ferrooxidans (strain ATCC 23270)).